We begin with the raw amino-acid sequence, 688 residues long: PTS system glucoside-specific EIICBA component (688 aa).

The 425-residue stretch at 3–427 (KKLFGQLQRI…FKLKTPGRED (425 aa)) folds into the PTS EIIC type-1 domain. 10 helical membrane-spanning segments follow: residues 12–32 (IGKALMLPVAILPAAGILLAF), 81–101 (LGLAGGDGVAALAALVGYLIM), 137–157 (LVLGIPTLQTGVFGGIIMGAL), 182–202 (FVPIVTSVVAIATGVLLSFAW), 223–243 (LTTFIFGIIERSLIPFGLHHI), 284–304 (AFTTGKYPFMMFGLPAAAFAI), 315–335 (VVGGLMLSAGLTAFLTGITEP), 340–360 (FLFVAPVLYGIHVLLAGTSFL), 364–384 (LLGVKIGMTFSGGFIDYILYG), and 395–415 (LVIPVGIVYAIVYYFLFDFAI). Residues 438–519 (AKLPFDVLDA…AKIMSGEITK (82 aa)) form the PTS EIIB type-1 domain. Cysteine 460 acts as the Phosphocysteine intermediate; for EIIB activity in catalysis. A PTS EIIA type-1 domain is found at 560–664 (DQVFAGKMMG…SIVTPMIITN (105 aa)). Histidine 612 serves as the catalytic Tele-phosphohistidine intermediate; for EIIA activity.

Its subcellular location is the cell membrane. Functionally, the phosphoenolpyruvate-dependent sugar phosphotransferase system (sugar PTS), a major carbohydrate active -transport system, catalyzes the phosphorylation of incoming sugar substrates concomitantly with their translocation across the cell membrane. This system is involved in alpha- and beta-glucoside transport. In Staphylococcus aureus (strain JH1), this protein is PTS system glucoside-specific EIICBA component (glcB).